A 221-amino-acid polypeptide reads, in one-letter code: PKHD-type hydroxylase Pro_1271 (221 aa).

A Fe2OG dioxygenase domain is found at 80-174; it reads KVHGVMFSKS…RIVCVGWIQS (95 aa). Fe cation-binding residues include histidine 98, aspartate 100, and histidine 155. Arginine 165 contacts 2-oxoglutarate.

Fe(2+) serves as cofactor. It depends on L-ascorbate as a cofactor.

The polypeptide is PKHD-type hydroxylase Pro_1271 (Prochlorococcus marinus (strain SARG / CCMP1375 / SS120)).